A 1412-amino-acid polypeptide reads, in one-letter code: DNA-directed RNA polymerase subunit beta' (1412 aa).

Cys-70, Cys-72, Cys-85, and Cys-88 together coordinate Zn(2+). 3 residues coordinate Mg(2+): Asp-460, Asp-462, and Asp-464. Residues Cys-819, Cys-893, Cys-900, and Cys-903 each contribute to the Zn(2+) site. Residues 1392–1412 (EEAFEFGTPSTPAEEPQHPAE) form a disordered region.

Belongs to the RNA polymerase beta' chain family. The RNAP catalytic core consists of 2 alpha, 1 beta, 1 beta' and 1 omega subunit. When a sigma factor is associated with the core the holoenzyme is formed, which can initiate transcription. Mg(2+) serves as cofactor. The cofactor is Zn(2+).

The catalysed reaction is RNA(n) + a ribonucleoside 5'-triphosphate = RNA(n+1) + diphosphate. Functionally, DNA-dependent RNA polymerase catalyzes the transcription of DNA into RNA using the four ribonucleoside triphosphates as substrates. This chain is DNA-directed RNA polymerase subunit beta', found in Burkholderia thailandensis (strain ATCC 700388 / DSM 13276 / CCUG 48851 / CIP 106301 / E264).